Here is a 377-residue protein sequence, read N- to C-terminus: Alanine racemase (377 aa).

Catalysis depends on K37, which acts as the Proton acceptor; specific for D-alanine. K37 bears the N6-(pyridoxal phosphate)lysine mark. R135 contributes to the substrate binding site. Y271 functions as the Proton acceptor; specific for L-alanine in the catalytic mechanism. Substrate is bound at residue M319.

Belongs to the alanine racemase family. Requires pyridoxal 5'-phosphate as cofactor.

The enzyme catalyses L-alanine = D-alanine. The protein operates within amino-acid biosynthesis; D-alanine biosynthesis; D-alanine from L-alanine: step 1/1. Catalyzes the interconversion of L-alanine and D-alanine. May also act on other amino acids. This is Alanine racemase (alr) from Helicobacter pylori (strain G27).